The primary structure comprises 212 residues: ATP-dependent dethiobiotin synthetase BioD (212 aa).

Residue 13 to 18 (GIGKTV) participates in ATP binding. Thr17 contributes to the Mg(2+) binding site. The active site involves Lys33. Ser37 contacts substrate. Glu100 provides a ligand contact to Mg(2+). ATP contacts are provided by residues 100-103 (EGAG) and 184-186 (PRL).

The protein belongs to the dethiobiotin synthetase family. In terms of assembly, homodimer. The cofactor is Mg(2+).

Its subcellular location is the cytoplasm. The enzyme catalyses (7R,8S)-7,8-diammoniononanoate + CO2 + ATP = (4R,5S)-dethiobiotin + ADP + phosphate + 3 H(+). It functions in the pathway cofactor biosynthesis; biotin biosynthesis; biotin from 7,8-diaminononanoate: step 1/2. Catalyzes a mechanistically unusual reaction, the ATP-dependent insertion of CO2 between the N7 and N8 nitrogen atoms of 7,8-diaminopelargonic acid (DAPA, also called 7,8-diammoniononanoate) to form a ureido ring. The sequence is that of ATP-dependent dethiobiotin synthetase BioD from Agrobacterium fabrum (strain C58 / ATCC 33970) (Agrobacterium tumefaciens (strain C58)).